Consider the following 521-residue polypeptide: Probable xyloglucan galactosyltransferase GT14 (521 aa).

The Cytoplasmic portion of the chain corresponds to 1-30; the sequence is MRPKNYSQMEKPISITTGKFRTNNNNNHNN. A helical; Signal-anchor for type II membrane protein membrane pass occupies residues 31–51; it reads VWFVVPLFFILCFVLLCFDYS. The Lumenal segment spans residues 52–521; that stretch reads ALFTDTDETA…SPYEEPQVLA (470 aa). The tract at residues 72–92 is disordered; sequence TSSEFTKDDNFSRFPDDPSPD. Basic and acidic residues predominate over residues 76 to 87; it reads FTKDDNFSRFPD. Residues Asn81, Asn177, Asn203, Asn249, Asn265, and Asn411 are each glycosylated (N-linked (GlcNAc...) asparagine). The interval 492–521 is disordered; that stretch reads RQGKDGSDGFDDRDDYKYTFSPYEEPQVLA.

Belongs to the glycosyltransferase 47 family. As to expression, expressed in roots, hypocotyls, cotyledons, leaves, stems, stamens and carpels.

Its subcellular location is the golgi apparatus membrane. Its function is as follows. Functions in xyloglucan synthesis by adding side chains to the xylosylated glucan backbone. Involved in the galactosylation of hemicellulose xyloglucan. This chain is Probable xyloglucan galactosyltransferase GT14, found in Arabidopsis thaliana (Mouse-ear cress).